A 2346-amino-acid polypeptide reads, in one-letter code: Acetyl-CoA carboxylase 1 (2346 aa).

Met-1 bears the N-acetylmethionine mark. A phosphoserine mark is found at Ser-5, Ser-23, Ser-25, Ser-29, Ser-34, Ser-48, Ser-50, and Ser-53. Phosphothreonine is present on Thr-58. Phosphoserine is present on residues Ser-78 and Ser-80. A Biotin carboxylation domain is found at 117 to 618 (VIEKVLIANN…DTGWLDRLIA (502 aa)). Residues 275–466 (SKRILNVPQE…LPAAQLQIAM (192 aa)) form the ATP-grasp domain. Residue 315–320 (GGGGKG) participates in ATP binding. Residues Glu-424, Glu-437, and Asn-439 each coordinate Mg(2+). Positions 424, 437, and 439 each coordinate Mn(2+). Residue Arg-441 is part of the active site. At Ser-488 the chain carries Phosphoserine. Phosphothreonine is present on Thr-610. A Biotinyl-binding domain is found at 745-819 (FEKENDPSVM…DPGCVLAKMQ (75 aa)). Lys-786 is subject to N6-biotinyllysine. 4 positions are modified to phosphoserine: Ser-835, Ser-1201, Ser-1216, and Ser-1218. The residue at position 1227 (Thr-1227) is a Phosphothreonine. A phosphoserine mark is found at Ser-1259, Ser-1263, and Ser-1273. Lys-1334 bears the N6-acetyllysine mark. A CoA carboxyltransferase N-terminal domain is found at 1576–1914 (PYVTKDLLQS…SVHSSVPLLN (339 aa)). The tract at residues 1576–2234 (PYVTKDLLQS…EDLVKKKIHN (659 aa)) is carboxyltransferase. Residues Arg-1823, Lys-2127, and Arg-2129 each contribute to the CoA site. The region spanning 1918–2234 (PIDRIIEFVP…EDLVKKKIHN (317 aa)) is the CoA carboxyltransferase C-terminal domain. At Thr-2153 the chain carries Phosphothreonine.

As to quaternary structure, monomer, homodimer, and homotetramer. Can form filamentous polymers. Interacts in its inactive phosphorylated form with the BRCT domains of BRCA1 which prevents ACACA dephosphorylation and inhibits lipid synthesis. Interacts with MID1IP1; interaction with MID1IP1 promotes oligomerization and increases its activity. It depends on Mg(2+) as a cofactor. Mn(2+) serves as cofactor. Requires biotin as cofactor. Post-translationally, phosphorylation on Ser-1263 is required for interaction with BRCA1. Phosphorylation at Ser-80 by AMPK inactivates enzyme activity. In terms of processing, the biotin cofactor is covalently attached to the central biotinyl-binding domain and is required for the catalytic activity. In terms of tissue distribution, expressed in brain, placenta, skeletal muscle, renal, pancreatic and adipose tissues; expressed at low level in pulmonary tissue; not detected in the liver.

It localises to the cytoplasm. The protein localises to the cytosol. The catalysed reaction is hydrogencarbonate + acetyl-CoA + ATP = malonyl-CoA + ADP + phosphate + H(+). The protein operates within lipid metabolism; malonyl-CoA biosynthesis; malonyl-CoA from acetyl-CoA: step 1/1. Inhibited by phosphorylation. Citrate promotes oligomerization of the protein into filaments that correspond to the most active form of the carboxylase. Inhibited by palmitoyl-CoA. Its function is as follows. Cytosolic enzyme that catalyzes the carboxylation of acetyl-CoA to malonyl-CoA, the first and rate-limiting step of de novo fatty acid biosynthesis. This is a 2 steps reaction starting with the ATP-dependent carboxylation of the biotin carried by the biotin carboxyl carrier (BCC) domain followed by the transfer of the carboxyl group from carboxylated biotin to acetyl-CoA. This chain is Acetyl-CoA carboxylase 1, found in Homo sapiens (Human).